The chain runs to 166 residues: Mitochondrial fission process protein 1 (166 aa).

Transmembrane regions (helical) follow at residues 34 to 54 (SLVPAAVVWLSYGVSSSYVLA) and 78 to 98 (ALAVVDTFVWQSLASVAIPGF). The residue at position 123 (Lys-123) is an N6-succinyllysine. A helical transmembrane segment spans residues 129 to 149 (LGLLAIPVIIHPIDRSVDFLL).

The protein belongs to the MTFP1 family.

The protein resides in the mitochondrion inner membrane. In terms of biological role, involved in the mitochondrial division probably by regulating membrane fission. Loss-of-function leads to apoptosis. The protein is Mitochondrial fission process protein 1 (Mtfp1) of Mus musculus (Mouse).